The sequence spans 151 residues: Deoxyuridine 5'-triphosphate nucleotidohydrolase (151 aa).

Substrate-binding positions include 70 to 72 (RSG), asparagine 83, 87 to 89 (LID), and methionine 97.

This sequence belongs to the dUTPase family. It depends on Mg(2+) as a cofactor.

It carries out the reaction dUTP + H2O = dUMP + diphosphate + H(+). Its pathway is pyrimidine metabolism; dUMP biosynthesis; dUMP from dCTP (dUTP route): step 2/2. Its function is as follows. This enzyme is involved in nucleotide metabolism: it produces dUMP, the immediate precursor of thymidine nucleotides and it decreases the intracellular concentration of dUTP so that uracil cannot be incorporated into DNA. The chain is Deoxyuridine 5'-triphosphate nucleotidohydrolase from Pseudomonas fluorescens (strain Pf0-1).